The chain runs to 799 residues: Histidine biosynthesis trifunctional protein (799 aa).

The tract at residues 1 to 229 is phosphoribosyl-AMP cyclohydrolase; it reads MVLPILPLID…FIVEQENVGF (229 aa). Residues 230–312 form a phosphoribosyl-ATP pyrophosphohydrolase region; the sequence is CHLETMSCFG…FYFALAKLVA (83 aa). The segment at 313–799 is histidinol dehydrogenase; that stretch reads NDVSLKDVEN…KLGLIPKDFQ (487 aa). Positions 618 and 621 each coordinate Zn(2+). Catalysis depends on residues Glu-687 and His-688. Positions 721 and 780 each coordinate Zn(2+).

It in the C-terminal section; belongs to the histidinol dehydrogenase family. Zn(2+) is required as a cofactor.

It carries out the reaction 1-(5-phospho-beta-D-ribosyl)-5'-AMP + H2O = 1-(5-phospho-beta-D-ribosyl)-5-[(5-phospho-beta-D-ribosylamino)methylideneamino]imidazole-4-carboxamide. The catalysed reaction is 1-(5-phospho-beta-D-ribosyl)-ATP + H2O = 1-(5-phospho-beta-D-ribosyl)-5'-AMP + diphosphate + H(+). The enzyme catalyses L-histidinol + 2 NAD(+) + H2O = L-histidine + 2 NADH + 3 H(+). Its pathway is amino-acid biosynthesis; L-histidine biosynthesis; L-histidine from 5-phospho-alpha-D-ribose 1-diphosphate: step 2/9. It functions in the pathway amino-acid biosynthesis; L-histidine biosynthesis; L-histidine from 5-phospho-alpha-D-ribose 1-diphosphate: step 3/9. The protein operates within amino-acid biosynthesis; L-histidine biosynthesis; L-histidine from 5-phospho-alpha-D-ribose 1-diphosphate: step 9/9. This Saccharomyces cerevisiae (strain ATCC 204508 / S288c) (Baker's yeast) protein is Histidine biosynthesis trifunctional protein.